Reading from the N-terminus, the 21-residue chain is Conchiolin protein p20 (21 aa).

Over residues 1 to 14 (YQRXSRYYYYXGPP) the composition is skewed to low complexity. Residues 1-21 (YQRXSRYYYYXGPPDDIDDRY) are disordered.

This sequence belongs to the N16 matrix protein family. Homooligomer; disulfide-linked. May also be disulfide-linked to insoluble organic matrix. According to PubMed:11250534, amino acids 4 and 11 may be sulfated or phosphorylated. By similarity with the N14 matrix protein, amino-acid 4 may be a cysteine involved in a disulfide bond. Component of conchiolin, the organic matrix of nacre. Is dispersed in calcium carbonate and also linked by disulfide bonds to the organic core of nacre.

The protein resides in the secreted. The protein localises to the extracellular space. Its subcellular location is the extracellular matrix. In terms of biological role, may be specifically involved in the formation of the nacreous layer. This Pinctada maxima (Silver-lipped pearl oyster) protein is Conchiolin protein p20.